A 247-amino-acid polypeptide reads, in one-letter code: ATP synthase subunit a, chloroplastic (247 aa).

Helical transmembrane passes span 38 to 58 (QVLI…TLAV), 95 to 115 (VPFI…GALL), 134 to 154 (INTT…AGLT), 199 to 219 (LVVV…VMFL), and 220 to 240 (GLFT…AYIG).

Belongs to the ATPase A chain family. In terms of assembly, F-type ATPases have 2 components, CF(1) - the catalytic core - and CF(0) - the membrane proton channel. CF(1) has five subunits: alpha(3), beta(3), gamma(1), delta(1), epsilon(1). CF(0) has four main subunits: a, b, b' and c.

The protein resides in the plastid. It localises to the chloroplast thylakoid membrane. In terms of biological role, key component of the proton channel; it plays a direct role in the translocation of protons across the membrane. The chain is ATP synthase subunit a, chloroplastic from Guizotia abyssinica (Niger).